We begin with the raw amino-acid sequence, 86 residues long: Small ribosomal subunit protein uS15 (86 aa).

Positions 1–10 (MSIDTQSIIE) are enriched in polar residues. A disordered region spans residues 1-21 (MSIDTQSIIENNKRSAHDTGS).

This sequence belongs to the universal ribosomal protein uS15 family. Part of the 30S ribosomal subunit. Forms a bridge to the 50S subunit in the 70S ribosome, contacting the 23S rRNA.

Functionally, one of the primary rRNA binding proteins, it binds directly to 16S rRNA where it helps nucleate assembly of the platform of the 30S subunit by binding and bridging several RNA helices of the 16S rRNA. Forms an intersubunit bridge (bridge B4) with the 23S rRNA of the 50S subunit in the ribosome. The polypeptide is Small ribosomal subunit protein uS15 (Xylella fastidiosa (strain M23)).